We begin with the raw amino-acid sequence, 538 residues long: MFS-type transporter tndD (538 aa).

The segment at 1–42 (MSLSGSDSHLAVSPTLAEDMNSSDTSAGLAETPPADEEKRSI) is disordered. 2 N-linked (GlcNAc...) asparagine glycosylation sites follow: Asn-21 and Asn-71. The next 11 membrane-spanning stretches (helical) occupy residues 81-101 (VGIVSALTFITPLASSMFAPG), 115-135 (LLAGFVVSVYVLGFAIGPLIL), 153-173 (ICFTVFSIACALSTNLGMLIA), 203-223 (GGVIAIYALGPLLGPVIGPVA), 235-255 (WVFWVLAIVGGGCTLASFLFL), 309-329 (PIVAASSVYVGIVYGYQYLMF), 348-368 (GLTFLGTGVGSLLGLFVIGAV), 394-414 (LPPLVWGAFFIPAGLFMYGWS), 422-442 (IVPIIGTGLVGIGNIAVFMCI), 444-464 (SYLVDAFTIFAASALAANTVV), and 485-505 (LGWGNSLLGFIAVVCIPIPWA).

This sequence belongs to the major facilitator superfamily.

Its subcellular location is the membrane. In terms of biological role, MFS-type transporter; part of the gene cluster that mediates the biosynthesis of talaronoid C, a fusicoccane diterpenoid with an unprecedented tricyclic 5/8/6 ring system. This Aspergillus flavipes protein is MFS-type transporter tndD.